We begin with the raw amino-acid sequence, 261 residues long: Type III pantothenate kinase (261 aa).

6-13 (DVGNTNTV) is a binding site for ATP. Position 107–110 (107–110 (GADR)) interacts with substrate. Asp-109 acts as the Proton acceptor in catalysis. Position 129 (Asp-129) interacts with K(+). Residue Thr-132 participates in ATP binding. Thr-183 serves as a coordination point for substrate.

The protein belongs to the type III pantothenate kinase family. In terms of assembly, homodimer. The cofactor is NH4(+). K(+) serves as cofactor.

It localises to the cytoplasm. The catalysed reaction is (R)-pantothenate + ATP = (R)-4'-phosphopantothenate + ADP + H(+). Its pathway is cofactor biosynthesis; coenzyme A biosynthesis; CoA from (R)-pantothenate: step 1/5. Catalyzes the phosphorylation of pantothenate (Pan), the first step in CoA biosynthesis. The polypeptide is Type III pantothenate kinase (Kosmotoga olearia (strain ATCC BAA-1733 / DSM 21960 / TBF 19.5.1)).